The sequence spans 362 residues: Sphingosine 1-phosphate receptor 1 (362 aa).

Topologically, residues 1-25 are extracellular; it reads MDDLIARHYNFTGKFRKVHKDPGLK. A glycan (N-linked (GlcNAc...) asparagine) is linked at asparagine 10. Residues 26–47 traverse the membrane as a helical segment; it reads ADSVVFIIVCCFIILENVLVLL. At 48-61 the chain is on the cytoplasmic side; it reads TIWRTKKFHKPMYY. The helical transmembrane segment at 62–83 threads the bilayer; it reads FIGNLALSDLLAGVVYTANILL. At 84-95 the chain is on the extracellular side; the sequence is SGANTYKLTPTQ. The helical transmembrane segment at 96-117 threads the bilayer; the sequence is WFFREGSMFVALAASVFSLLAI. Residue 99 to 100 coordinates sphing-4-enine 1-phosphate; the sequence is RE. At 118–139 the chain is on the cytoplasmic side; the sequence is AIERHLTMLKMKLHNNGKTCRV. Residues 140–161 traverse the membrane as a helical segment; sequence FMLISTVWFIAAILGGLPVMGW. Residues 162-175 are Extracellular-facing; the sequence is NCIDSMNNCSTVLP. Residues cysteine 163 and cysteine 170 are joined by a disulfide bond. Residue asparagine 169 is glycosylated (N-linked (GlcNAc...) asparagine). A helical membrane pass occupies residues 176–203; the sequence is LYHKAYILFCTTVFSVILMAIVILYARI. Residues 204–238 lie on the Cytoplasmic side of the membrane; it reads YALVRTRSRKLVFRKVANGRGSNKSSEKSMALLKT. The helical transmembrane segment at 239–259 threads the bilayer; that stretch reads VIIVLSCFIACWAPLFILLLL. 246 to 250 is a binding site for sphing-4-enine 1-phosphate; the sequence is FIACW. Topologically, residues 260–270 are extracellular; that stretch reads DVACQTLTCSI. An intrachain disulfide couples cysteine 263 to cysteine 268. Residues 271–291 form a helical membrane-spanning segment; sequence LYKAEWFLALAVLNSAMNPLI. The Cytoplasmic segment spans residues 292-362; it reads YTLTSNEMRR…VSSGNITSSS (71 aa). Residue cysteine 309 is the site of S-palmitoyl cysteine attachment. Residues 328-362 form a disordered region; that stretch reads FSRSKSDNSSHPNKDEPEYSPRETIVSSGNITSSS. Basic and acidic residues predominate over residues 329 to 348; sequence SRSKSDNSSHPNKDEPEYSP. Polar residues predominate over residues 352 to 362; the sequence is IVSSGNITSSS.

The protein belongs to the G-protein coupled receptor 1 family.

It localises to the cell membrane. In terms of biological role, G-protein coupled receptor for the bioactive lysosphingolipid sphingosine 1-phosphate (S1P) that seems to be coupled to the G(i) subclass of heteromeric G proteins. Signaling leads to the activation of RAC1, SRC, PTK2/FAK1 and MAP kinases. Plays an important role in cell migration, probably via its role in the reorganization of the actin cytoskeleton and the formation of lamellipodia in response to stimuli that increase the activity of the sphingosine kinase SPHK1. Required for normal chemotaxis toward sphingosine 1-phosphate. In Danio rerio (Zebrafish), this protein is Sphingosine 1-phosphate receptor 1 (s1pr1).